A 150-amino-acid polypeptide reads, in one-letter code: Ribosomal RNA large subunit methyltransferase H (150 aa).

S-adenosyl-L-methionine-binding positions include isoleucine 71, alanine 100, and 118 to 123 (LSEMTF).

The protein belongs to the RNA methyltransferase RlmH family. Homodimer.

The protein localises to the cytoplasm. It carries out the reaction pseudouridine(1915) in 23S rRNA + S-adenosyl-L-methionine = N(3)-methylpseudouridine(1915) in 23S rRNA + S-adenosyl-L-homocysteine + H(+). Specifically methylates the pseudouridine at position 1915 (m3Psi1915) in 23S rRNA. In Helicobacter acinonychis (strain Sheeba), this protein is Ribosomal RNA large subunit methyltransferase H.